The primary structure comprises 264 residues: S-methyl-5'-thioadenosine phosphorylase (264 aa).

Residues Ser-14 and 55-56 each bind phosphate; that span reads RH. Met-180 is a substrate binding site. Thr-181 lines the phosphate pocket. Position 204–206 (204–206) interacts with substrate; the sequence is DVD.

This sequence belongs to the PNP/MTAP phosphorylase family. MTAP subfamily. Homodimer.

It catalyses the reaction S-methyl-5'-thioadenosine + phosphate = 5-(methylsulfanyl)-alpha-D-ribose 1-phosphate + adenine. The protein operates within amino-acid biosynthesis; L-methionine biosynthesis via salvage pathway; S-methyl-5-thio-alpha-D-ribose 1-phosphate from S-methyl-5'-thioadenosine (phosphorylase route): step 1/1. Its activity is regulated as follows. Not inhibited by adenosine, potently inhibited by MT-DADMe-immucillin A. Its function is as follows. Catalyzes the reversible phosphorylation of S-methyl-5'-thioadenosine (MTA) to adenine and 5-methylthioribose-1-phosphate. Involved in the breakdown of MTA, a major by-product of polyamine biosynthesis. Responsible for the first step in the methionine salvage pathway after MTA has been generated from S-adenosylmethionine. Prefers MTA, with 2% activity on adenosine, 0.8% activity on S-adenosyl-L-homocysteine and no activity on other tested nucleosides. In Mycobacterium tuberculosis (strain ATCC 25618 / H37Rv), this protein is S-methyl-5'-thioadenosine phosphorylase.